Reading from the N-terminus, the 513-residue chain is Histidine ammonia-lyase (513 aa).

Residues 144-146 (ASG) constitute a cross-link (5-imidazolinone (Ala-Gly)). Ser145 is modified (2,3-didehydroalanine (Ser)).

This sequence belongs to the PAL/histidase family. In terms of processing, contains an active site 4-methylidene-imidazol-5-one (MIO), which is formed autocatalytically by cyclization and dehydration of residues Ala-Ser-Gly.

The protein localises to the cytoplasm. It catalyses the reaction L-histidine = trans-urocanate + NH4(+). The protein operates within amino-acid degradation; L-histidine degradation into L-glutamate; N-formimidoyl-L-glutamate from L-histidine: step 1/3. The chain is Histidine ammonia-lyase from Streptococcus pyogenes serotype M18 (strain MGAS8232).